The primary structure comprises 241 residues: Uridylate kinase (241 aa).

14-17 (KLSG) is a binding site for ATP. Residue glycine 56 participates in UMP binding. ATP-binding residues include glycine 57 and arginine 61. UMP contacts are provided by residues aspartate 77 and 138 to 145 (TGNPFFTT). Residues threonine 165, tyrosine 171, and aspartate 174 each coordinate ATP.

It belongs to the UMP kinase family. As to quaternary structure, homohexamer.

The protein localises to the cytoplasm. The enzyme catalyses UMP + ATP = UDP + ADP. It participates in pyrimidine metabolism; CTP biosynthesis via de novo pathway; UDP from UMP (UMPK route): step 1/1. Its activity is regulated as follows. Inhibited by UTP. In terms of biological role, catalyzes the reversible phosphorylation of UMP to UDP. The chain is Uridylate kinase from Psychrobacter arcticus (strain DSM 17307 / VKM B-2377 / 273-4).